Here is a 1079-residue protein sequence, read N- to C-terminus: Psi-producing oxygenase A (1079 aa).

Residues 105-446 form a linoleate 8R-lipoxygenase region; it reads TNTFLTTLWN…DGSYDDNDLV (342 aa). Histidine 202 provides a ligand contact to heme b. The active site involves tyrosine 374. Histidine 377 serves as a coordination point for heme b. Residues 654–1079 form a 9,12-octadecadienoate 8-hydroperoxide 8R-isomerase region; sequence QFINSHSACM…WDGDLPEVKE (426 aa).

Belongs to the peroxidase family. In terms of assembly, homotetramer. Requires heme b as cofactor.

The enzyme catalyses (9Z,12Z)-octadecadienoate + O2 = (8R,9Z,12Z)-8-hydroperoxyoctadeca-9,12-dienoate. It carries out the reaction (8R,9Z,12Z)-8-hydroperoxyoctadeca-9,12-dienoate = (5S,8R,9Z,12Z)-5,8-dihydroxyoctadeca-9,12-dienoate. Functionally, bifunctional heme-containing enzyme that oxidizes linoleic acid to (8R,9Z,12Z)-8-hydroperoxyoctadeca-9,12-dienoate (within the N-terminal heme peroxidase domain), which is subsequently isomerized to (5S,8R,9Z,12Z)-5,8-dihydroxyoctadeca-9,12-dienoate (within the C-terminal P450 heme thiolate domain). Oxidized unsaturated fatty acids, so-called oxylipins, derived from endogenous fatty acids, influence the development of the asexual conidiophores and sexual cleistothecia and regulate the secondary metabolism. These substances were collectively named psi factors and are primarily a mixture of hydroxylated oleic, linoleic and alpha-linolenic acids. They are termed psi-beta, psi-alpha, and psi-gamma, respectively. Oxylipins may also serve as activators of mammalian immune responses contributing to enhanced resistance to opportunistic fungi and as factors that modulate fungal development contributing to resistance to host defenses. The protein is Psi-producing oxygenase A (ppoA) of Aspergillus fumigatus (strain CBS 144.89 / FGSC A1163 / CEA10) (Neosartorya fumigata).